The sequence spans 110 residues: MPVVIRLARAGTKKRPVYHVVVADSRYPRDGRFIERLGYFNPLMPKDNADRLKIDLDKVKAWLAKGAQPSDRVARFLDAAGVKKRTARNNPEKAVPRKERKAQAEAAAKS.

Positions 84 to 110 are disordered; that stretch reads KRTARNNPEKAVPRKERKAQAEAAAKS. The span at 90-103 shows a compositional bias: basic and acidic residues; the sequence is NPEKAVPRKERKAQ.

This sequence belongs to the bacterial ribosomal protein bS16 family.

This chain is Small ribosomal subunit protein bS16, found in Nitrobacter hamburgensis (strain DSM 10229 / NCIMB 13809 / X14).